Reading from the N-terminus, the 375-residue chain is Alcohol dehydrogenase 3, mitochondrial (375 aa).

The N-terminal 24 residues, 1-24 (MLRTSTLFTRRVQPSLFSRNILRL), are a transit peptide targeting the mitochondrion. A Zn(2+)-binding site is contributed by Cys71. Residues His72, Thr73, and His76 each contribute to the NAD(+) site. The Zn(2+) site is built by His94, Glu95, Cys125, Cys128, Cys131, Cys139, and Cys181. NAD(+) is bound by residues Gly208, Gly209, Leu210, Asp229, Lys234, Phe249, Val296, Ser321, Val323, and Arg368.

It belongs to the zinc-containing alcohol dehydrogenase family. In terms of assembly, homotetramer. The cofactor is Zn(2+).

Its subcellular location is the mitochondrion matrix. It localises to the mitochondrion inner membrane. The catalysed reaction is a primary alcohol + NAD(+) = an aldehyde + NADH + H(+). The enzyme catalyses a secondary alcohol + NAD(+) = a ketone + NADH + H(+). It carries out the reaction ethanol + NAD(+) = acetaldehyde + NADH + H(+). It catalyses the reaction butan-1-ol + NAD(+) = butanal + NADH + H(+). The catalysed reaction is hexan-1-ol + NAD(+) = hexanal + NADH + H(+). In terms of biological role, mitochondrial isozyme that reduces acetaldehyde to ethanol during the fermentation of glucose. Involved in the shuttling of mitochondrial reducing equivalents to the cytosol, where the redox balance is restored by NADH dehydrogenases on the external side of the mitochondrial inner membrane. Shows a high affinity for alcohols with a double bond conjugated to the alcohol group. The polypeptide is Alcohol dehydrogenase 3, mitochondrial (ADH3) (Saccharomyces cerevisiae (strain ATCC 204508 / S288c) (Baker's yeast)).